Consider the following 145-residue polypeptide: Lysozyme-like protein 4 (145 aa).

Residues 1 to 19 form the signal peptide; the sequence is MQLYLVLLLISYLLTPIGA. The region spanning 20-145 is the C-type lysozyme domain; the sequence is SILGRCTVAK…LDRWLDGCDL (126 aa). 4 cysteine pairs are disulfide-bonded: C25/C143, C49/C130, C84/C95, and C91/C109. The active site involves E54.

It belongs to the glycosyl hydrolase 22 family. As to quaternary structure, monomer. In terms of tissue distribution, expressed strongly in testis and in epididymis, and weakly in brain and lung. Detected in sperm (at protein level).

It localises to the secreted. The protein localises to the cytoplasmic vesicle. It is found in the secretory vesicle. The protein resides in the acrosome. Its subcellular location is the cell projection. It localises to the cilium. The protein localises to the flagellum. In terms of biological role, may be involved in fertilization. Has no detectable bacteriolytic in vitro. Has no lysozyme activity in vitro. The sequence is that of Lysozyme-like protein 4 (Lyzl4) from Mus musculus (Mouse).